The primary structure comprises 342 residues: N-acetyl-gamma-glutamyl-phosphate reductase (342 aa).

Residue cysteine 149 is part of the active site.

The protein belongs to the NAGSA dehydrogenase family. Type 1 subfamily.

Its subcellular location is the cytoplasm. It catalyses the reaction N-acetyl-L-glutamate 5-semialdehyde + phosphate + NADP(+) = N-acetyl-L-glutamyl 5-phosphate + NADPH + H(+). It functions in the pathway amino-acid biosynthesis; L-arginine biosynthesis; N(2)-acetyl-L-ornithine from L-glutamate: step 3/4. Functionally, catalyzes the NADPH-dependent reduction of N-acetyl-5-glutamyl phosphate to yield N-acetyl-L-glutamate 5-semialdehyde. The protein is N-acetyl-gamma-glutamyl-phosphate reductase of Cereibacter sphaeroides (strain ATCC 17025 / ATH 2.4.3) (Rhodobacter sphaeroides).